The sequence spans 136 residues: MNHSVFVILITITYFGLNQACIKNIVEILNQLAPGQILEYHCRSEDDNLGVKQLNFNATPFVIRFHDEIPNLTRWNCIFRQGPNNSYSYDIEVYKAGPRLIPRCGQLRVWAARIDGIYFARKYNTPLVRVLSWNKN.

The N-terminal stretch at 1–20 (MNHSVFVILITITYFGLNQA) is a signal peptide. N-linked (GlcNAc...) asparagine glycans are attached at residues Asn-71 and Asn-84.

This sequence belongs to the plant self-incompatibility (S1) protein family.

The protein resides in the secreted. The polypeptide is S-protein homolog 25 (Arabidopsis thaliana (Mouse-ear cress)).